A 154-amino-acid polypeptide reads, in one-letter code: Endoribonuclease YbeY (154 aa).

The Zn(2+) site is built by His-114, His-118, and His-124.

It belongs to the endoribonuclease YbeY family. Zn(2+) serves as cofactor.

Its subcellular location is the cytoplasm. Functionally, single strand-specific metallo-endoribonuclease involved in late-stage 70S ribosome quality control and in maturation of the 3' terminus of the 16S rRNA. The protein is Endoribonuclease YbeY of Marinomonas sp. (strain MWYL1).